A 122-amino-acid polypeptide reads, in one-letter code: Large ribosomal subunit protein uL14 (122 aa).

The protein belongs to the universal ribosomal protein uL14 family. In terms of assembly, part of the 50S ribosomal subunit. Forms a cluster with proteins L3 and L19. In the 70S ribosome, L14 and L19 interact and together make contacts with the 16S rRNA in bridges B5 and B8.

Binds to 23S rRNA. Forms part of two intersubunit bridges in the 70S ribosome. This is Large ribosomal subunit protein uL14 from Campylobacter jejuni subsp. jejuni serotype O:6 (strain 81116 / NCTC 11828).